The following is a 496-amino-acid chain: Lysine--tRNA ligase (496 aa).

Positions 409 and 416 each coordinate Mg(2+).

Belongs to the class-II aminoacyl-tRNA synthetase family. In terms of assembly, homodimer. Mg(2+) serves as cofactor.

It is found in the cytoplasm. It carries out the reaction tRNA(Lys) + L-lysine + ATP = L-lysyl-tRNA(Lys) + AMP + diphosphate. The sequence is that of Lysine--tRNA ligase from Streptococcus pneumoniae (strain Hungary19A-6).